The sequence spans 689 residues: Glycine--tRNA ligase beta subunit (689 aa).

The protein belongs to the class-II aminoacyl-tRNA synthetase family. In terms of assembly, tetramer of two alpha and two beta subunits.

The protein resides in the cytoplasm. The catalysed reaction is tRNA(Gly) + glycine + ATP = glycyl-tRNA(Gly) + AMP + diphosphate. This chain is Glycine--tRNA ligase beta subunit, found in Shewanella woodyi (strain ATCC 51908 / MS32).